Consider the following 282-residue polypeptide: Elongation factor Ts (282 aa).

An involved in Mg(2+) ion dislocation from EF-Tu region spans residues 80-83; it reads TDFV.

It belongs to the EF-Ts family.

The protein resides in the cytoplasm. Associates with the EF-Tu.GDP complex and induces the exchange of GDP to GTP. It remains bound to the aminoacyl-tRNA.EF-Tu.GTP complex up to the GTP hydrolysis stage on the ribosome. This is Elongation factor Ts from Chlamydia trachomatis serovar A (strain ATCC VR-571B / DSM 19440 / HAR-13).